The following is a 346-amino-acid chain: Centromere protein L (346 aa).

Phosphoserine is present on Ser41. Thr45 is modified (phosphothreonine). A Phosphoserine modification is found at Ser55.

This sequence belongs to the CENP-L/IML3 family. In terms of assembly, component of the CENPA-CAD complex, composed of CENPI, CENPK, CENPL, CENPO, CENPP, CENPQ, CENPR and CENPS. The CENPA-CAD complex interacts with the CENPA-NAC complex, at least composed of CENPA, CENPC, CENPH, CENPM, CENPN, CENPT and CENPU.

It localises to the nucleus. The protein localises to the chromosome. It is found in the centromere. Component of the CENPA-CAD (nucleosome distal) complex, a complex recruited to centromeres which is involved in assembly of kinetochore proteins, mitotic progression and chromosome segregation. May be involved in incorporation of newly synthesized CENPA into centromeres via its interaction with the CENPA-NAC complex. The protein is Centromere protein L (CENPL) of Bos taurus (Bovine).